The primary structure comprises 336 residues: USG-1 protein homolog (336 aa).

Belongs to the aspartate-semialdehyde dehydrogenase family.

This chain is USG-1 protein homolog (usg), found in Azotobacter vinelandii.